Reading from the N-terminus, the 282-residue chain is NADPH-dependent 7-cyano-7-deazaguanine reductase (282 aa).

Residue 90-92 (IES) coordinates substrate. Residue 92-93 (SK) participates in NADPH binding. Cys190 serves as the catalytic Thioimide intermediate. The active-site Proton donor is the Asp197. 229–230 (HE) lines the substrate pocket. 258–259 (RG) contributes to the NADPH binding site.

This sequence belongs to the GTP cyclohydrolase I family. QueF type 2 subfamily. In terms of assembly, homodimer.

It is found in the cytoplasm. The catalysed reaction is 7-aminomethyl-7-carbaguanine + 2 NADP(+) = 7-cyano-7-deazaguanine + 2 NADPH + 3 H(+). It participates in tRNA modification; tRNA-queuosine biosynthesis. Its function is as follows. Catalyzes the NADPH-dependent reduction of 7-cyano-7-deazaguanine (preQ0) to 7-aminomethyl-7-deazaguanine (preQ1). The chain is NADPH-dependent 7-cyano-7-deazaguanine reductase from Aeromonas salmonicida (strain A449).